The primary structure comprises 154 residues: MHCPFCGANDTKVIDSRLVAEGEQVRRRRECLACGERFTTFETAELVLPRLIKQDGSRQPFDEEKLRAGMQRALEKRPVSVERLEAALVHIKHKLRATGEREVKSLVVGELVMAELQKLDEVAYIRFASVYRRFQDLNEFREEIDRLAREPGKE.

A zinc finger spans residues 3 to 34; the sequence is CPFCGANDTKVIDSRLVAEGEQVRRRRECLAC. Residues 49 to 139 form the ATP-cone domain; it reads PRLIKQDGSR…VYRRFQDLNE (91 aa).

This sequence belongs to the NrdR family. Requires Zn(2+) as cofactor.

Negatively regulates transcription of bacterial ribonucleotide reductase nrd genes and operons by binding to NrdR-boxes. The polypeptide is Transcriptional repressor NrdR (Pseudomonas savastanoi pv. phaseolicola (strain 1448A / Race 6) (Pseudomonas syringae pv. phaseolicola (strain 1448A / Race 6))).